The sequence spans 236 residues: Syntaxin-8 (236 aa).

At 1–215 the chain is on the cytoplasmic side; it reads MAPDPWFSTY…MVDRKSASCG (215 aa). Residues 42–65 adopt a coiled-coil conformation; it reads VTIRALLQNLKEKIALLKDLLLRA. Positions 145 to 207 constitute a t-SNARE coiled-coil homology domain; sequence QKIIQEQDAG…RNETRRVNMV (63 aa). Position 160 is a phosphoserine (S160). A helical; Anchor for type IV membrane protein membrane pass occupies residues 216–232; that stretch reads MIMVILLLLVAIVVVAV. The Vesicular segment spans residues 233-236; sequence WPTN.

Belongs to the syntaxin family. Forms a SNARE complex with STX7, VTI1B and VAMP8 which functions in the homotypic fusion of late endosomes. Part of the SNARE core complex containing STX7, VAMP8 and VTI1B. Interacts with VAMP8. Interacts with HECTD3. Interacts with TPC1. Ubiquitinated by HECTD3. As to expression, highly expressed in heart. Also found in brain, kidney, liver, lung, placenta, skeletal muscle, spleen and pancreas.

It localises to the membrane. Its function is as follows. Vesicle trafficking protein that functions in the early secretory pathway, possibly by mediating retrograde transport from cis-Golgi membranes to the ER. The chain is Syntaxin-8 (STX8) from Homo sapiens (Human).